Reading from the N-terminus, the 638-residue chain is Octopamine receptor 1 (638 aa).

Over 1–28 (MSRDIFMKRLRLHLLFDEVAMVTHIVGD) the chain is Extracellular. Residues 29 to 53 (VLSSVLLCAVVLLVLVGNTLVVAAV) traverse the membrane as a helical segment. Residues 54–64 (ATSRKLRTVTN) lie on the Cytoplasmic side of the membrane. A helical transmembrane segment spans residues 65 to 87 (VFIVNLACADLLLGVLVLPFSAV). At 88–102 (NEIKDVWIFGHVWCQ) the chain is on the extracellular side. A disulfide bridge links Cys-101 with Cys-230. Residues 103–124 (VWLAVDVWLCTASILNLCCISL) form a helical membrane-spanning segment. Residues 125–147 (DRYLAITRPIRYPGLMSAKRAKT) are Cytoplasmic-facing. The chain crosses the membrane as a helical span at residues 148 to 167 (LVAGVWLFSFVICCPPLIGW). Residues 168–239 (NDGGDGIMDY…CELTNSRGYR (72 aa)) lie on the Extracellular side of the membrane. N-linked (GlcNAc...) asparagine glycans are attached at residues Asn-178, Asn-207, and Asn-215. Residues 240–259 (IYAALGSFFIPMLVMVFFYL) form a helical membrane-spanning segment. Topologically, residues 260-520 (QIYRAAVKTI…FNREKKAAKT (261 aa)) are cytoplasmic. A helical transmembrane segment spans residues 521 to 545 (LAIIVGAFIMCWMPFFTIYLVGAFC). At 546 to 551 (ENCISP) the chain is on the extracellular side. The chain crosses the membrane as a helical span at residues 552–575 (IVFSVAFWLGYCNSAMNPCVYALF). The Cytoplasmic segment spans residues 576–638 (SRDFRFAFRK…TASGGNGGYT (63 aa)). Positions 618–638 (DDAKSSSDIGPTASGGNGGYT) are disordered.

The protein belongs to the G-protein coupled receptor 1 family. In terms of tissue distribution, expressed in the central nervous system.

The protein localises to the cell membrane. G-protein coupled receptor for octopamine (OA), which is a neurotransmitter, neurohormone, and neuromodulator in invertebrates. Activation of this receptor by octopamine induces an increase in both inositol phosphates and cyclic AMP. The coupling to adenylyl cyclase seems to be less efficient than the coupling to phospholipase C. The rank order of potency for agonists is p-synephrine &gt;= clonidine &gt; p-octopamine = xylometazoline = phenylephrine = oxymetazoline &gt; B-HT920 &gt; serotonin = p-tyramine &gt; epinephrine &gt; norepinephrine &gt; methoxamine = dopamine = histamine. For antagonists, the rank order is yohimbine &gt; chlopromazine / spiperone &gt; phentolamine &gt; mianserine &gt; rauwolscine &gt; prazosin &gt; alprenolol / propanolol &gt; pindolol. In Lymnaea stagnalis (Great pond snail), this protein is Octopamine receptor 1.